Reading from the N-terminus, the 631-residue chain is RING finger protein 112 (631 aa).

The RING-type zinc-finger motif lies at 57-98 (CSICLERLREPISLDCGHDFCIRCFSTHRIPGCELPCCPECR). Residues 131 to 631 (AVRAERLLLV…GDREPLLQEE (501 aa)) form an interaction with ZBTB16 region. One can recognise a GB1/RHD3-type G domain in the interval 166 to 397 (DTPVCLLAVL…YISDVLSTAP (232 aa)). 317–318 (RD) lines the GTP pocket. A run of 2 helical transmembrane segments spans residues 547-567 (LAAV…GVVG) and 580-600 (GMVA…GGGV).

The protein belongs to the TRAFAC class dynamin-like GTPase superfamily. GB1/RHD3 GTPase family. GB1 subfamily. Self-associates. Interacts with SP1 in an oxidative stress-regulated manner. Interacts with SIGMAR1 in an oxidative stress-regulated manner. Interacts with ZBTB16 (via C2H2-type zinc finger domains 1 and 2). Post-translationally, auto-ubiquitinated. As to expression, predominantly expressed in brain.

It is found in the membrane. It localises to the cytoplasm. The protein resides in the nucleus. Its subcellular location is the nuclear body. The protein localises to the nucleoplasm. It is found in the endosome. It localises to the cytoplasmic vesicle. The protein resides in the secretory vesicle. Its subcellular location is the synaptic vesicle. The protein localises to the postsynaptic density. It is found in the perikaryon. It localises to the cell projection. The protein resides in the neuron projection. It carries out the reaction S-ubiquitinyl-[E2 ubiquitin-conjugating enzyme]-L-cysteine + [acceptor protein]-L-lysine = [E2 ubiquitin-conjugating enzyme]-L-cysteine + N(6)-ubiquitinyl-[acceptor protein]-L-lysine.. Its pathway is protein modification; protein ubiquitination. In terms of biological role, E3 ubiquitin-protein ligase that plays an important role in neuronal differentiation, including neurogenesis and gliogenesis, during brain development. During embryonic development initiates neuronal differentiation by inducing cell cycle arrest at the G0/G1 phase through up-regulation of cell-cycle regulatory proteins. Plays a role not only in the fetal period during the development of the nervous system, but also in the adult brain, where it is involved in the maintenance of neural functions and protection of the nervous tissue cells from oxidative stress-induced damage. Exhibits GTPase and E3 ubiquitin-protein ligase activities. Regulates dendritic spine density and synaptic neurotransmission; its ability to hydrolyze GTP is involved in the maintenance of dendritic spine density. The sequence is that of RING finger protein 112 (Rnf112) from Rattus norvegicus (Rat).